The chain runs to 89 residues: Small ribosomal subunit protein uS14 (89 aa).

The protein belongs to the universal ribosomal protein uS14 family. Part of the 30S ribosomal subunit. Contacts proteins S3 and S10.

In terms of biological role, binds 16S rRNA, required for the assembly of 30S particles and may also be responsible for determining the conformation of the 16S rRNA at the A site. This chain is Small ribosomal subunit protein uS14, found in Azobacteroides pseudotrichonymphae genomovar. CFP2.